The sequence spans 320 residues: tRNA N6-adenosine threonylcarbamoyltransferase (320 aa).

Residues His-114 and His-118 each coordinate Fe cation. Substrate contacts are provided by residues 136 to 140 (VVSGG), Asp-169, Gly-182, Asp-186, and Asn-273. Residue Asp-297 participates in Fe cation binding.

It belongs to the KAE1 / TsaD family. It depends on Fe(2+) as a cofactor.

The protein localises to the cytoplasm. It carries out the reaction L-threonylcarbamoyladenylate + adenosine(37) in tRNA = N(6)-L-threonylcarbamoyladenosine(37) in tRNA + AMP + H(+). In terms of biological role, required for the formation of a threonylcarbamoyl group on adenosine at position 37 (t(6)A37) in tRNAs that read codons beginning with adenine. Is involved in the transfer of the threonylcarbamoyl moiety of threonylcarbamoyl-AMP (TC-AMP) to the N6 group of A37, together with TsaE and TsaB. TsaD likely plays a direct catalytic role in this reaction. The polypeptide is tRNA N6-adenosine threonylcarbamoyltransferase (Ureaplasma urealyticum serovar 10 (strain ATCC 33699 / Western)).